The following is a 195-amino-acid chain: Large ribosomal subunit protein uL5 (195 aa).

Belongs to the universal ribosomal protein uL5 family. As to quaternary structure, part of the 50S ribosomal subunit; part of the 5S rRNA/L5/L18/L25 subcomplex. Contacts the 5S rRNA and the P site tRNA. Forms a bridge to the 30S subunit in the 70S ribosome.

Its function is as follows. This is one of the proteins that bind and probably mediate the attachment of the 5S RNA into the large ribosomal subunit, where it forms part of the central protuberance. In the 70S ribosome it contacts protein S13 of the 30S subunit (bridge B1b), connecting the 2 subunits; this bridge is implicated in subunit movement. Contacts the P site tRNA; the 5S rRNA and some of its associated proteins might help stabilize positioning of ribosome-bound tRNAs. In Chlorobium phaeobacteroides (strain DSM 266 / SMG 266 / 2430), this protein is Large ribosomal subunit protein uL5.